The sequence spans 368 residues: S-adenosylmethionine decarboxylase proenzyme (368 aa).

Residues Glu-26 and Glu-29 contribute to the active site. The active-site Schiff-base intermediate with substrate; via pyruvic acid is Ser-83. The residue at position 83 (Ser-83) is a Pyruvic acid (Ser); by autocatalysis. Residue Cys-97 is the Proton donor; for catalytic activity of the active site. Catalysis depends on proton acceptor; for processing activity residues Ser-246 and His-261.

This sequence belongs to the eukaryotic AdoMetDC family. As to quaternary structure, heterotetramer of two alpha and two beta chains. It depends on pyruvate as a cofactor. Post-translationally, is synthesized initially as an inactive proenzyme. Formation of the active enzyme involves a self-maturation process in which the active site pyruvoyl group is generated from an internal serine residue via an autocatalytic post-translational modification. Two non-identical subunits are generated from the proenzyme in this reaction, and the pyruvate is formed at the N-terminus of the alpha chain, which is derived from the carboxyl end of the proenzyme. The post-translation cleavage follows an unusual pathway, termed non-hydrolytic serinolysis, in which the side chain hydroxyl group of the serine supplies its oxygen atom to form the C-terminus of the beta chain, while the remainder of the serine residue undergoes an oxidative deamination to produce ammonia and the pyruvoyl group blocking the N-terminus of the alpha chain.

The catalysed reaction is S-adenosyl-L-methionine + H(+) = S-adenosyl 3-(methylsulfanyl)propylamine + CO2. The protein operates within amine and polyamine biosynthesis; S-adenosylmethioninamine biosynthesis; S-adenosylmethioninamine from S-adenosyl-L-methionine: step 1/1. In terms of biological role, essential for biosynthesis of the polyamines spermidine and spermine. Polyamines are essential for cell proliferation and are implicated in cellular processes, ranging from DNA replication to apoptosis. The protein is S-adenosylmethionine decarboxylase proenzyme of Caenorhabditis elegans.